Consider the following 211-residue polypeptide: Troponin I, cardiac muscle (211 aa).

A disordered region spans residues 1-24 (MADESSDAAGEPQPAPAPVRRRSS). A2 carries the N-acetylalanine modification. Phosphoserine is present on residues S5 and S6. S23 and S24 each carry phosphoserine; by PKA and PKD/PRKD1. Y27 carries the post-translational modification Phosphotyrosine. The residue at position 32 (T32) is a Phosphothreonine; by STK4/MST1. Positions 33–80 (EPHAKKKSKISASRKLQLKTLMLQIAKQEMEREAEERRGEKGRVLRTR) are involved in binding TNC. Phosphoserine; by PKC/PRKCE occurs at positions 43 and 45. Phosphothreonine; by STK4/MST1 is present on T52. Residue T79 is modified to Phosphothreonine. Phosphothreonine; by STK4/MST1 occurs at positions 130 and 144. Residues 130–151 (TQKIYDLRGKFKRPTLRRVRIS) are involved in binding TNC and actin. A phosphoserine mark is found at S151, S167, and S200.

The protein belongs to the troponin I family. As to quaternary structure, interacts with TRIM63. Binds to actin and tropomyosin. Interacts with STK4/MST1. In terms of processing, phosphorylated at Ser-23 and Ser-24 by PRKD1; phosphorylation reduces myofilament calcium sensitivity. Phosphorylated preferentially at Thr-32. Phosphorylation by STK4/MST1 alters its binding affinity to TNNC1 (cardiac Tn-C) and TNNT2 (cardiac Tn-T). Phosphorylated at Ser-43 and Ser-45 by PRKCE; phosphorylation increases myocardium contractile dysfunction.

Functionally, troponin I is the inhibitory subunit of troponin, the thin filament regulatory complex which confers calcium-sensitivity to striated muscle actomyosin ATPase activity. The polypeptide is Troponin I, cardiac muscle (Tnni3) (Mus musculus (Mouse)).